A 94-amino-acid polypeptide reads, in one-letter code: Putative pterin-4-alpha-carbinolamine dehydratase (94 aa).

This sequence belongs to the pterin-4-alpha-carbinolamine dehydratase family.

The catalysed reaction is (4aS,6R)-4a-hydroxy-L-erythro-5,6,7,8-tetrahydrobiopterin = (6R)-L-erythro-6,7-dihydrobiopterin + H2O. The protein is Putative pterin-4-alpha-carbinolamine dehydratase of Mycobacterium sp. (strain KMS).